Here is a 257-residue protein sequence, read N- to C-terminus: Phycoerythrobilin:ferredoxin oxidoreductase (257 aa).

This sequence belongs to the HY2 family.

It catalyses the reaction (3Z)-phycoerythrobilin + oxidized 2[4Fe-4S]-[ferredoxin] = 15,16-dihydrobiliverdin + reduced 2[4Fe-4S]-[ferredoxin] + 2 H(+). In terms of biological role, catalyzes the two-electron reduction of the C2 and C3(1) diene system of 15,16-dihydrobiliverdin. The polypeptide is Phycoerythrobilin:ferredoxin oxidoreductase (pebB) (Synechococcus sp. (strain WH8020)).